The chain runs to 935 residues: Coiled-coil domain-containing protein 191 (935 aa).

Coiled coils occupy residues 189-324 (RLTM…ENQQ), 366-438 (YTRS…ALLK), 554-589 (RHVF…AEAQ), and 660-740 (KAME…LEAI). Disordered regions lie at residues 596 to 661 (SAVT…ILKA) and 678 to 715 (EKKK…RKRE).

The sequence is that of Coiled-coil domain-containing protein 191 (CCDC191) from Macaca fascicularis (Crab-eating macaque).